We begin with the raw amino-acid sequence, 260 residues long: Thiazole synthase (260 aa).

Catalysis depends on lysine 101, which acts as the Schiff-base intermediate with DXP. Residues glycine 162, 188–189 (AG), and 210–211 (NT) contribute to the 1-deoxy-D-xylulose 5-phosphate site.

Belongs to the ThiG family. Homotetramer. Forms heterodimers with either ThiH or ThiS.

Its subcellular location is the cytoplasm. It catalyses the reaction [ThiS sulfur-carrier protein]-C-terminal-Gly-aminoethanethioate + 2-iminoacetate + 1-deoxy-D-xylulose 5-phosphate = [ThiS sulfur-carrier protein]-C-terminal Gly-Gly + 2-[(2R,5Z)-2-carboxy-4-methylthiazol-5(2H)-ylidene]ethyl phosphate + 2 H2O + H(+). The protein operates within cofactor biosynthesis; thiamine diphosphate biosynthesis. Its function is as follows. Catalyzes the rearrangement of 1-deoxy-D-xylulose 5-phosphate (DXP) to produce the thiazole phosphate moiety of thiamine. Sulfur is provided by the thiocarboxylate moiety of the carrier protein ThiS. In vitro, sulfur can be provided by H(2)S. This Acidithiobacillus ferrooxidans (strain ATCC 23270 / DSM 14882 / CIP 104768 / NCIMB 8455) (Ferrobacillus ferrooxidans (strain ATCC 23270)) protein is Thiazole synthase.